Here is a 713-residue protein sequence, read N- to C-terminus: NAD(+) hydrolase SARM1 (713 aa).

One copy of the ARM 1 repeat lies at Asp-53–Glu-96. Residues Trp-99, Arg-106, Glu-145–Arg-153, and His-186–Lys-189 each bind NAD(+). ARM repeat units lie at residues Glu-110 to Val-149, Glu-151 to Lys-189, Glu-192 to Met-231, Gly-233 to Asn-276, Arg-277 to Asp-310, Ser-311 to Ser-350, and Gln-355 to Pro-398. 2 SAM domains span residues Trp-408–Tyr-472 and Cys-478–Ala-537. Residues Lys-552 to Pro-695 form the TIR domain. NAD(+) is bound by residues Arg-561 to Arg-562 and Glu-591. Glu-634 is an active-site residue.

It belongs to the SARM1 family. In terms of assembly, homooctamer; forms an octameric ring via SAM domains.

It localises to the cytoplasm. It is found in the cell projection. Its subcellular location is the axon. The protein resides in the dendrite. The protein localises to the synapse. It localises to the mitochondrion. It catalyses the reaction NAD(+) + H2O = ADP-D-ribose + nicotinamide + H(+). It carries out the reaction NAD(+) = cyclic ADP-beta-D-ribose + nicotinamide + H(+). The enzyme catalyses NADP(+) + H2O = ADP-D-ribose 2'-phosphate + nicotinamide + H(+). With respect to regulation, autoinhibited: in the inactive state, the enzymatic TIR domain is held apart by the autoinhibiting ARM repeats. NAD(+)-binding to ARM repeats maintains an inactive state by promoting interaction between ARM repeats and the TIR domain, thereby facilitating inhibition of the enzymatic TIR domain. Following activation, possibly by nicotinamide mononucleotide (NMN), auto-inhibitory interactions are released, allowing self-association of the TIR domains and subsequent activation of the NAD(+) hydrolase (NADase) activity. Self-association of TIR domains is facilitated by the octamer of SAM domains. Functionally, NAD(+) hydrolase, which plays a key role in axonal degeneration following injury by regulating NAD(+) metabolism. Acts as a negative regulator of MYD88- and TRIF-dependent toll-like receptor signaling pathway by promoting Wallerian degeneration, an injury-induced form of programmed subcellular death which involves degeneration of an axon distal to the injury site. Wallerian degeneration is triggerred by NAD(+) depletion: in response to injury, SARM1 is activated and catalyzes cleavage of NAD(+) into ADP-D-ribose (ADPR), cyclic ADPR (cADPR) and nicotinamide; NAD(+) cleavage promoting cytoskeletal degradation and axon destruction. Also able to hydrolyze NADP(+), but not other NAD(+)-related molecules. Can activate neuronal cell death in response to stress. This chain is NAD(+) hydrolase SARM1, found in Danio rerio (Zebrafish).